A 359-amino-acid polypeptide reads, in one-letter code: Double-stranded RNA-binding protein 3 (359 aa).

2 consecutive DRBM domains span residues Met1–Ser70 and Ile87–Lys155. A compositionally biased stretch (basic and acidic residues) spans Glu266–Ile280. Disordered stretches follow at residues Glu266–Val292 and Ala328–Asn359. Over residues Ala328–Asn338 the composition is skewed to pro residues.

Its function is as follows. Binds double-stranded RNA. The chain is Double-stranded RNA-binding protein 3 (DRB3) from Arabidopsis thaliana (Mouse-ear cress).